Here is a 144-residue protein sequence, read N- to C-terminus: Small ribosomal subunit protein bS6 (144 aa).

The tract at residues 97–144 (EEGPSAMMRKADRDRERDERGGPREGGFRSERGPRRPREEETTASVEE) is disordered. Positions 105–137 (RKADRDRERDERGGPREGGFRSERGPRRPREEE) are enriched in basic and acidic residues.

It belongs to the bacterial ribosomal protein bS6 family.

In terms of biological role, binds together with bS18 to 16S ribosomal RNA. This is Small ribosomal subunit protein bS6 from Afipia carboxidovorans (strain ATCC 49405 / DSM 1227 / KCTC 32145 / OM5) (Oligotropha carboxidovorans).